The following is a 419-amino-acid chain: Probable G-protein coupled receptor 63 (419 aa).

Residues M1–Q81 are Extracellular-facing. Residues N16, N28, and N62 are each glycosylated (N-linked (GlcNAc...) asparagine). A helical membrane pass occupies residues I82–L104. Topologically, residues M105–A115 are cytoplasmic. Residues I116–A138 traverse the membrane as a helical segment. Over L139 to S157 the chain is Extracellular. The helical transmembrane segment at A158–I177 threads the bilayer. At D178 to K196 the chain is on the cytoplasmic side. Residues V197 to G216 traverse the membrane as a helical segment. The Extracellular portion of the chain corresponds to N217–Q240. Residues A241 to M263 form a helical membrane-spanning segment. Over G264–T315 the chain is Cytoplasmic. A helical membrane pass occupies residues I316–T338. Residues F339–I352 lie on the Extracellular side of the membrane. Residues S353–I375 traverse the membrane as a helical segment. At K376 to V419 the chain is on the cytoplasmic side.

The protein belongs to the G-protein coupled receptor 1 family. In terms of tissue distribution, expressed in brain; detected in the frontal cortex, with lower levels in the thalamus, caudate, hypothalamus and midbrain.

Its subcellular location is the cell membrane. Orphan receptor. May play a role in brain function. This chain is Probable G-protein coupled receptor 63 (GPR63), found in Homo sapiens (Human).